The chain runs to 204 residues: Large ribosomal subunit protein uL4 (204 aa).

Positions 49–90 (KVKGMGEVSGTTKKPYRQKGTGSARQGSLRAPQYRTGGAVHG) are disordered.

It belongs to the universal ribosomal protein uL4 family. As to quaternary structure, part of the 50S ribosomal subunit.

Its function is as follows. One of the primary rRNA binding proteins, this protein initially binds near the 5'-end of the 23S rRNA. It is important during the early stages of 50S assembly. It makes multiple contacts with different domains of the 23S rRNA in the assembled 50S subunit and ribosome. In terms of biological role, forms part of the polypeptide exit tunnel. The sequence is that of Large ribosomal subunit protein uL4 from Gluconacetobacter diazotrophicus (strain ATCC 49037 / DSM 5601 / CCUG 37298 / CIP 103539 / LMG 7603 / PAl5).